The following is a 301-amino-acid chain: Probable alpha-L-glutamate ligase 1 (301 aa).

The region spanning 104-287 is the ATP-grasp domain; the sequence is LQLLSRKGIG…VTEPIVEYIE (184 aa). Residues Lys-141, 178 to 179, Asp-187, and 211 to 213 contribute to the ATP site; these read EY and RSN. Residues Asp-248, Glu-260, and Asn-262 each coordinate Mg(2+). Residues Asp-248, Glu-260, and Asn-262 each coordinate Mn(2+).

It belongs to the RimK family. Requires Mg(2+) as cofactor. Mn(2+) is required as a cofactor.

In Shewanella sp. (strain MR-4), this protein is Probable alpha-L-glutamate ligase 1.